A 388-amino-acid chain; its full sequence is Chaperone protein DnaJ (388 aa).

Residues 5 to 69 (DYYDVLGVDK…QKKAQYDQFG (65 aa)) form the J domain. The CR-type zinc finger occupies 145-227 (GKKTDITYTR…CHGKGTIDKK (83 aa)). Cys-158, Cys-161, Cys-175, Cys-178, Cys-201, Cys-204, Cys-215, and Cys-218 together coordinate Zn(2+). CXXCXGXG motif repeat units lie at residues 158 to 165 (CPTCDGSG), 175 to 182 (CDKCHGTG), 201 to 208 (CDKCGGRG), and 215 to 222 (CQTCHGKG).

The protein belongs to the DnaJ family. Homodimer. Requires Zn(2+) as cofactor.

It localises to the cytoplasm. Participates actively in the response to hyperosmotic and heat shock by preventing the aggregation of stress-denatured proteins and by disaggregating proteins, also in an autonomous, DnaK-independent fashion. Unfolded proteins bind initially to DnaJ; upon interaction with the DnaJ-bound protein, DnaK hydrolyzes its bound ATP, resulting in the formation of a stable complex. GrpE releases ADP from DnaK; ATP binding to DnaK triggers the release of the substrate protein, thus completing the reaction cycle. Several rounds of ATP-dependent interactions between DnaJ, DnaK and GrpE are required for fully efficient folding. Also involved, together with DnaK and GrpE, in the DNA replication of plasmids through activation of initiation proteins. The chain is Chaperone protein DnaJ from Lactobacillus gasseri (strain ATCC 33323 / DSM 20243 / BCRC 14619 / CIP 102991 / JCM 1131 / KCTC 3163 / NCIMB 11718 / NCTC 13722 / AM63).